The chain runs to 211 residues: Thiamine-phosphate synthase (211 aa).

Residues Q39–K43 and N71 each bind 4-amino-2-methyl-5-(diphosphooxymethyl)pyrimidine. 2 residues coordinate Mg(2+): D72 and D91. 4-amino-2-methyl-5-(diphosphooxymethyl)pyrimidine is bound at residue S110. T136–T138 lines the 2-[(2R,5Z)-2-carboxy-4-methylthiazol-5(2H)-ylidene]ethyl phosphate pocket. Residue K139 participates in 4-amino-2-methyl-5-(diphosphooxymethyl)pyrimidine binding. 2-[(2R,5Z)-2-carboxy-4-methylthiazol-5(2H)-ylidene]ethyl phosphate is bound by residues A167 and V187–S188.

It belongs to the thiamine-phosphate synthase family. Mg(2+) serves as cofactor.

The enzyme catalyses 2-[(2R,5Z)-2-carboxy-4-methylthiazol-5(2H)-ylidene]ethyl phosphate + 4-amino-2-methyl-5-(diphosphooxymethyl)pyrimidine + 2 H(+) = thiamine phosphate + CO2 + diphosphate. It catalyses the reaction 2-(2-carboxy-4-methylthiazol-5-yl)ethyl phosphate + 4-amino-2-methyl-5-(diphosphooxymethyl)pyrimidine + 2 H(+) = thiamine phosphate + CO2 + diphosphate. The catalysed reaction is 4-methyl-5-(2-phosphooxyethyl)-thiazole + 4-amino-2-methyl-5-(diphosphooxymethyl)pyrimidine + H(+) = thiamine phosphate + diphosphate. The protein operates within cofactor biosynthesis; thiamine diphosphate biosynthesis; thiamine phosphate from 4-amino-2-methyl-5-diphosphomethylpyrimidine and 4-methyl-5-(2-phosphoethyl)-thiazole: step 1/1. Functionally, condenses 4-methyl-5-(beta-hydroxyethyl)thiazole monophosphate (THZ-P) and 2-methyl-4-amino-5-hydroxymethyl pyrimidine pyrophosphate (HMP-PP) to form thiamine monophosphate (TMP). The protein is Thiamine-phosphate synthase of Solidesulfovibrio magneticus (strain ATCC 700980 / DSM 13731 / RS-1) (Desulfovibrio magneticus).